Reading from the N-terminus, the 330-residue chain is Putative [LysW]-L-2-aminoadipate/[LysW]-L-glutamate phosphate reductase (330 aa).

10 to 13 provides a ligand contact to NADP(+); that stretch reads SGYI. Cys142 is an active-site residue. NADP(+) is bound at residue Asn297.

This sequence belongs to the NAGSA dehydrogenase family. Type 1 subfamily. LysY sub-subfamily.

The protein localises to the cytoplasm. It catalyses the reaction [amino-group carrier protein]-C-terminal-N-(1-carboxy-5-oxopentan-1-yl)-L-glutamine + phosphate + NADP(+) = [amino-group carrier protein]-C-terminal-N-(1-carboxy-5-phosphooxy-5-oxopentan-1-yl)-L-glutamine + NADPH + H(+). The catalysed reaction is [amino-group carrier protein]-C-terminal-gamma-(L-glutamyl-5-semialdehyde)-L-glutamate + phosphate + NADP(+) = [amino-group carrier protein]-C-terminal-gamma-(5-phospho-L-glutamyl)-L-glutamate + NADPH + H(+). Its pathway is amino-acid biosynthesis; L-lysine biosynthesis via AAA pathway; L-lysine from L-alpha-aminoadipate (Thermus route): step 3/5. It participates in amino-acid biosynthesis; L-arginine biosynthesis. Involved in both the arginine and lysine biosynthetic pathways. The sequence is that of Putative [LysW]-L-2-aminoadipate/[LysW]-L-glutamate phosphate reductase from Pyrococcus horikoshii (strain ATCC 700860 / DSM 12428 / JCM 9974 / NBRC 100139 / OT-3).